The following is a 421-amino-acid chain: Hydrolyase poxO (421 aa).

The Nucleophile role is filled by serine 239.

It belongs to the AB hydrolase superfamily. FUS2 hydrolase family. As to quaternary structure, homodimer.

It participates in secondary metabolite biosynthesis. Functionally, hydrolyase; part of the gene cluster that mediates the biosynthesis of oxaleimides, cytotoxic compounds containing an unusual disubstituted succinimide moiety. The first step of the pathway is provided by the HR-PKS poxF that serves in a new mode of collaborative biosynthesis with the PKS-NRPS poxE, by providing the olefin containing amino acid substrate via the synthesis of an ACP-bound dec-4-enoate. The cytochrome P450 monooxygenase poxM-catalyzed oxidation at the alpha-position creates the enzyme-bound 2-hydroxydec-4-enoyl-ACP thioester, which may be prone to spontaneous hydrolysis to yield 2-hydroxydec-4-enoic acid due to increased electrophilicity of the carbonyl. 2-hydroxydec-4-enoic acid can then be further oxidized by poxM to yield the alpha-ketoacid 2-oxodec-4-enoicacid, which is reductively aminated by the aminotransferase poxL to yield (S,E)-2-aminodec-4-enoic acid. The Hybrid PKS-NRPS synthetase poxE then performs condensation between the octaketide product of its PKS modules and the amino group of (S,E)-2-aminodec-4-enoic acid which is activated and incorporated by the adenylation domain. The resulting aminoacyl product can be cyclized by the Diels-Alderase PoxQ and reductively released by the reductive (R) domain of poxE to yield an aldehyde intermediate. The released aldehyde is then substrate for a Knoevenagel condensation by the hydrolyase poxO followed by an oxidation at the 5-position of the pyrrolidone ring. The presence of the olefin from the amino acid building block allows for migration of the substituted allyl group to occur. This allylic transposition reaction takes place in a conjugate addition, semipinacol-like fashion to yield a succinimide intermediate. Iterative two-electron oxidations of the C7 methyl of the succinimide intermediate to the carboxylic acid can be catalyzed by one of two remaining cytochrome P450 monooxygenasess poxC or poxD to yield oxaleimide A. Subsequent oxidation yields the maleimide scaffold oxaleimide I. Both oxaleimide A and oxaleimide I can undergo oxidative modifications in the decalin ring to yield the series of products oxaleimides B to H. The chain is Hydrolyase poxO from Penicillium oxalicum.